The chain runs to 149 residues: D-aminoacyl-tRNA deacylase (149 aa).

The short motif at 137-138 (GP) is the Gly-cisPro motif, important for rejection of L-amino acids element.

It belongs to the DTD family. As to quaternary structure, homodimer.

Its subcellular location is the cytoplasm. The enzyme catalyses glycyl-tRNA(Ala) + H2O = tRNA(Ala) + glycine + H(+). It catalyses the reaction a D-aminoacyl-tRNA + H2O = a tRNA + a D-alpha-amino acid + H(+). Functionally, an aminoacyl-tRNA editing enzyme that deacylates mischarged D-aminoacyl-tRNAs. Also deacylates mischarged glycyl-tRNA(Ala), protecting cells against glycine mischarging by AlaRS. Acts via tRNA-based rather than protein-based catalysis; rejects L-amino acids rather than detecting D-amino acids in the active site. By recycling D-aminoacyl-tRNA to D-amino acids and free tRNA molecules, this enzyme counteracts the toxicity associated with the formation of D-aminoacyl-tRNA entities in vivo and helps enforce protein L-homochirality. The polypeptide is D-aminoacyl-tRNA deacylase (Desulfotalea psychrophila (strain LSv54 / DSM 12343)).